Here is a 470-residue protein sequence, read N- to C-terminus: Amino-acid permease RocC (470 aa).

12 consecutive transmembrane segments (helical) span residues 18 to 38 (FMIA…GFTI), 44 to 64 (LGAI…MLCL), 90 to 110 (GFMI…LELT), 119 to 139 (WLPS…IFLI), 159 to 179 (VAAI…LIDF), 196 to 216 (GLFP…NFSF), 243 to 263 (VIWR…AILP), 281 to 301 (IGIP…ILSV), 338 to 358 (ALLI…MAAE), 360 to 380 (VYLW…MSIC), 409 to 429 (LVPI…IFIP), and 433 to 453 (IGLY…HLSI).

Belongs to the amino acid-polyamine-organocation (APC) superfamily.

Its subcellular location is the cell membrane. Its function is as follows. Putative transport protein involved in arginine degradative pathway. Probably transports arginine or ornithine. In Bacillus subtilis (strain 168), this protein is Amino-acid permease RocC (rocC).